The sequence spans 379 residues: MSSAPEKQQPPHGGGGGGGGGGGAAMDPASSGPSKAKKTNAGIRRPEKPPYSYIALIVMAIQSSPTKRLTLSEIYQFLQSRFPFFRGSYQGWKNSVRHNLSLNECFIKLPKGLGRPGKGHYWTIDPASEFMFEEGSFRRRPRGFRRKCQALKPMYSMMNGLGFNHLPDTYGFQGSAGGLSCPPNSLALEGGLGMMNGHLPGNVDGMALPSHSVPHLPSNGGHSYMGGCGGAAAGEYPHHDSSVPASPLLPTGAGGVMEPHAVYSGSAAAWPPSASAALNSGASYIKQQPLSPCNPAANPLSGSLSTHSLEQPYLHQNSHNAPAELQGIPRYHSQSPSMCDRKEFVFSFNAMASSSMHSAGGGSYYHQQVTYQDIKPCVM.

The tract at residues 1–45 is disordered; it reads MSSAPEKQQPPHGGGGGGGGGGGAAMDPASSGPSKAKKTNAGIRR. Gly residues predominate over residues 12–24; it reads HGGGGGGGGGGGA. Positions 47–138 form a DNA-binding region, fork-head; it reads EKPPYSYIAL…EFMFEEGSFR (92 aa).

Expressed in lung and placenta.

It localises to the nucleus. In terms of biological role, probable transcription activator for a number of lung-specific genes. In Homo sapiens (Human), this protein is Forkhead box protein F1 (FOXF1).